The following is a 1510-amino-acid chain: ABC transporter C family MRP4 (1510 aa).

The next 12 helical transmembrane spans lie at 12–32, 55–75, 78–98, 109–129, 138–158, 177–197, 319–339, 342–362, 373–393, 427–447, 453–473, and 540–560; these read EAVAATAHAALLALAALLLLL, PAVVVGDGAGGALAAATAGAW, AVLASCAYALLSQVAVLSYEV, ALLLPAVQAVSWAALLALALQ, FPALVRLWWVVSFALCVVIAY, MVANFASVPALGFLCLVGVMG, TFAAVNTIVSYVGPYLISYFV, LSGNIAFPHEGYILASIFFVA, WYLGVDIMGIHVKSGLTAMVY, AWYFHDIWMLPLQIILALAIL, IAMVSTLVATVLSIAASVPVA, and FVFWSSPIFVAVITFGTCILL. The ABC transmembrane type-1 1 domain maps to 320 to 595; sequence FAAVNTIVSY…FPDLISMMAQ (276 aa). In terms of domain architecture, ABC transporter 1 spans 629-852; that stretch reads VDIKDGAFSW…GTDFNALVSA (224 aa). 664 to 671 serves as a coordination point for ATP; it reads GVIGSGKS. Residues 889–925 form a disordered region; sequence LKNKMCENGQPSNTRGIKEKKKKEERKKKRTVQEEER. Residues 906–918 are compositionally biased toward basic residues; it reads KEKKKKEERKKKR. 6 helical membrane passes run 945 to 965, 985 to 1005, 1060 to 1082, 1086 to 1108, 1154 to 1174, and 1179 to 1199; these read GTLIPLIILAQTMFQVLQIAS, SVVLLVVYMSLAFGSSLFVFM, IAFRLGGFASTTIQLLGIVAVMS, WQVLILIVPMAVACMWMQRYYIA, LLDCFARPLFSSLAAIEWLCL, and LSTFVFAFCMAILVSFPPGTI. The ABC transmembrane type-1 2 domain occupies 950–1220; sequence LIILAQTMFQ…GLNLNARMSR (271 aa). The ABC transporter 2 domain occupies 1267–1501; that stretch reads IELIDLKVRY…KSSMFIQLVS (235 aa). An ATP-binding site is contributed by 1301-1308; that stretch reads GRTGSGKS.

Belongs to the ABC transporter superfamily. ABCC family. Conjugate transporter (TC 3.A.1.208) subfamily. In terms of tissue distribution, expressed in roots, leaves, stalks, tassels, silks, developing seeds and developing embryos.

The protein resides in the membrane. In terms of biological role, ABC transporter that may affect phytic acid transport and compartmentalization. May function directly or indirectly in removing phytic acid from the cytosol or in vesicle trafficking. Required for phytic acid accumulation in developing seeds. Phytic acid is the primary storage form of phosphorus in cereal grains and other plant seeds. This chain is ABC transporter C family MRP4, found in Zea mays (Maize).